A 481-amino-acid chain; its full sequence is Cysteine--tRNA ligase (481 aa).

C29 contributes to the Zn(2+) binding site. Positions 31 to 41 (PTVYDYSHLGH) match the 'HIGH' region motif. 3 residues coordinate Zn(2+): C210, H235, and E239. The 'KMSKS' region signature appears at 272–276 (KMSKS). K275 contacts ATP.

This sequence belongs to the class-I aminoacyl-tRNA synthetase family. In terms of assembly, monomer. Requires Zn(2+) as cofactor.

It localises to the cytoplasm. The enzyme catalyses tRNA(Cys) + L-cysteine + ATP = L-cysteinyl-tRNA(Cys) + AMP + diphosphate. The sequence is that of Cysteine--tRNA ligase from Anaeromyxobacter dehalogenans (strain 2CP-C).